The following is a 445-amino-acid chain: Phenylacetate-coenzyme A ligase (445 aa).

Belongs to the phenylacetyl-CoA ligase family. In terms of assembly, monomer.

The enzyme catalyses 2-phenylacetate + ATP + CoA = phenylacetyl-CoA + AMP + diphosphate. It participates in aromatic compound metabolism; phenylacetate degradation. Its function is as follows. Catalyzes the activation of phenylacetic acid (PA) to phenylacetyl-CoA (PA-CoA). Involved in the phenylalanine metabolism. The sequence is that of Phenylacetate-coenzyme A ligase from Thermus thermophilus (strain ATCC BAA-163 / DSM 7039 / HB27).